Consider the following 254-residue polypeptide: MRILVTNDDGIHAPGLETLQGIARELSDDVWVVAPEYDQSGVSHSLSLNDPLRLRQVSEKRFAVKGTPSDCVIMGVSHILKDHRPDLVLSGVNRGQNVAEDVTYSGTIAGAMEGTILGIRAIALSQAYGAGGRANLKWSCAAAHGAAVIRKILEIGIEPGILVNVNFPDCEPEEVQGVAVSAQGQRNQALLQIDARHDGRGNPYFWLAFAKARFEPGNGTDLKAIAENRIAVTPLRLDLTDEPELTRFAAAFRA.

Positions 8, 9, 40, and 93 each coordinate a divalent metal cation.

It belongs to the SurE nucleotidase family. The cofactor is a divalent metal cation.

It is found in the cytoplasm. The catalysed reaction is a ribonucleoside 5'-phosphate + H2O = a ribonucleoside + phosphate. Nucleotidase that shows phosphatase activity on nucleoside 5'-monophosphates. The polypeptide is 5'-nucleotidase SurE (Methylorubrum populi (strain ATCC BAA-705 / NCIMB 13946 / BJ001) (Methylobacterium populi)).